The primary structure comprises 368 residues: Abasic site processing protein YMR114C (368 aa).

C2 (nucleophile) is an active-site residue. Thiazolidine linkage to a ring-opened DNA abasic site is present on C2. Positions 25–48 (VNTPKDASSNSQHPHDEEDTKDQP) are disordered. The segment covering 37–46 (HPHDEEDTKD) has biased composition (basic and acidic residues). Residue E132 is part of the active site. Residues 270 to 368 (LENDNEQGID…DSRGKKKIKK (99 aa)) form a disordered region. Composition is skewed to basic and acidic residues over residues 281-296 (RGVK…DVFN), 304-313 (NSYDGLKKNE), and 326-349 (IGDR…EKRN). Residue S338 is modified to Phosphoserine.

Belongs to the SOS response-associated peptidase family.

The protein resides in the chromosome. With respect to regulation, formation and reversal of DNA-protein cross-link depends on DNA context. Catalyzes formation of the thiazolidine linkage in presence of abasic sites in single-stranded DNA. Mediates the reversal of the thiazolidine cross-link in presence of double stranded DNA. Functionally, sensor of abasic sites in single-stranded DNA (ssDNA) required to preserve genome integrity by promoting error-free repair of abasic sites. Recognizes and binds abasic sites in ssDNA at replication forks and chemically modifies the lesion by forming a covalent cross-link with DNA: forms a stable thiazolidine linkage between a ring-opened abasic site and the alpha-amino and sulfhydryl substituents of its N-terminal catalytic cysteine residue. The DNA-protein cross-link is then reversed: able to catalyze the reversal of the thiazolidine cross-link and cycle between a cross-link and a non-cross-linked state depending on DNA context: mediates self-reversal of the thiazolidine cross-link in double stranded DNA. Acts as a protease: mediates autocatalytic processing of its N-terminal methionine in order to expose the catalytic cysteine. The sequence is that of Abasic site processing protein YMR114C from Saccharomyces cerevisiae (strain ATCC 204508 / S288c) (Baker's yeast).